Reading from the N-terminus, the 246-residue chain is MSVISMKQLLEAGVHFGHQTRRWNPKMKRYIFTERNGIYIIDLQKTVKKVEEAYNFTKNLAADGGKILFVGTKKQAQDSVKEEAERSGMYYVNQRWLGGTLTNFETIQKRIKRLKDIEKMQENGTFDVLPKKEVVQLKKELERLEKFLGGIKEMKELPDALFIIDPRKERIAVAEARKLNIPIIGIVDTNCDPDEIDVVIPANDDAIRAVKLLTSKMADAILEAKQGEESAETEAKEAETTETTTA.

Residues 224–246 (AKQGEESAETEAKEAETTETTTA) form a disordered region. Positions 225-239 (KQGEESAETEAKEAE) are enriched in basic and acidic residues.

It belongs to the universal ribosomal protein uS2 family.

The sequence is that of Small ribosomal subunit protein uS2 from Bacillus licheniformis (strain ATCC 14580 / DSM 13 / JCM 2505 / CCUG 7422 / NBRC 12200 / NCIMB 9375 / NCTC 10341 / NRRL NRS-1264 / Gibson 46).